The primary structure comprises 240 residues: Putative tyrosine phosphatase 067L (240 aa).

Positions 3–151 constitute a Tyrosine-protein phosphatase domain; the sequence is QASFFVADKA…EREWPLNPTQ (149 aa). Cysteine 96 functions as the Phosphocysteine intermediate in the catalytic mechanism.

It belongs to the protein-tyrosine phosphatase family.

The catalysed reaction is O-phospho-L-tyrosyl-[protein] + H2O = L-tyrosyl-[protein] + phosphate. The protein is Putative tyrosine phosphatase 067L of Aedes vexans (Inland floodwater mosquito).